The following is a 146-amino-acid chain: Anti-sigma F factor (146 aa).

The protein belongs to the anti-sigma-factor family.

It catalyses the reaction L-seryl-[protein] + ATP = O-phospho-L-seryl-[protein] + ADP + H(+). The catalysed reaction is L-threonyl-[protein] + ATP = O-phospho-L-threonyl-[protein] + ADP + H(+). Its function is as follows. Binds to sigma F and blocks its ability to form an RNA polymerase holoenzyme (E-sigma F). Phosphorylates SpoIIAA on a serine residue. This phosphorylation may enable SpoIIAA to act as an anti-anti-sigma factor that counteracts SpoIIAB and thus releases sigma F from inhibition. The protein is Anti-sigma F factor of Bacillus cereus (strain ATCC 14579 / DSM 31 / CCUG 7414 / JCM 2152 / NBRC 15305 / NCIMB 9373 / NCTC 2599 / NRRL B-3711).